A 1305-amino-acid polypeptide reads, in one-letter code: Contactin-associated protein like 5-3 (1305 aa).

The first 24 residues, 1–24 (MDSVPRLNSVFTLVLSGLWHFGLT), serve as a signal peptide directing secretion. Positions 25-174 (ATNYNCDDPL…IGMRVEVYGC (150 aa)) constitute an F5/8 type C domain. Residues 25–1235 (ATNYNCDDPL…EPLTNAVPSD (1211 aa)) are Extracellular-facing. Laminin G-like domains are found at residues 180–360 (VADF…TFSC) and 367–544 (PITF…IDLC). Residue Asn282 is glycosylated (N-linked (GlcNAc...) asparagine). Cys329 and Cys360 are joined by a disulfide. Residue Asn496 is glycosylated (N-linked (GlcNAc...) asparagine). 3 disulfides stabilise this stretch: Cys512–Cys544, Cys550–Cys561, and Cys555–Cys570. The 38-residue stretch at 546 to 583 (IKDRCLPNYCEHGGQCAQTWTNFYCNCSDTGYTGATCH) folds into the EGF-like 1 domain. An N-linked (GlcNAc...) asparagine glycan is attached at Asn571. Cys572 and Cys582 are disulfide-bonded. Residues 584-790 (DSIYEQSCEV…LRCYGDRHFW (207 aa)) enclose the Fibrinogen C-terminal domain. The Laminin G-like 3 domain maps to 791–956 (NAVSFSTEAS…KVTSGVRPGC (166 aa)). Intrachain disulfides connect Cys929–Cys956, Cys960–Cys973, Cys967–Cys982, and Cys984–Cys994. The region spanning 957–995 (PGHCSSYGRNCQNGGKCVEKHIGYSCDCTNSPYEGPFCQ) is the EGF-like 2 domain. Positions 1013–1198 (QEPYSVTKNT…VQRTLTESSC (186 aa)) constitute a Laminin G-like 4 domain. N-linked (GlcNAc...) asparagine glycosylation is found at Asn1023 and Asn1057. Cys1163 and Cys1198 are joined by a disulfide. A helical membrane pass occupies residues 1236–1256 (LAVIGGIIAVVTFISFSVIGI). Over 1257-1305 (MTHFFYQHKRSHYASQMKEKEYPENVDSSSRNDIDLQNTTRECKQEDFI) the chain is Cytoplasmic.

This sequence belongs to the neurexin family. In terms of tissue distribution, expressed in brain.

The protein localises to the membrane. In terms of biological role, may play a role in the correct development and proper functioning of the peripheral and central nervous system and be involved in cell adhesion and intercellular communication. This chain is Contactin-associated protein like 5-3 (Cntnap5c), found in Mus musculus (Mouse).